A 424-amino-acid chain; its full sequence is Zinc finger protein 597 (424 aa).

A KRAB domain is found at 14-88; the sequence is ILFEDLAVYF…KYPIAAPLVP (75 aa). 4 C2H2-type zinc fingers span residues 156–178, 184–206, 212–234, and 240–262; these read YKCPECDQNFSDHSYLVLHQKIH, HKCGDCGKIFNHRANLRTHRRIH, YKCAKCSASFRQHSHLSRHMNSH, and YTCSICGRGFMWLPGLAQHQKSH. Lys-300 participates in a covalent cross-link: Glycyl lysine isopeptide (Lys-Gly) (interchain with G-Cter in SUMO2). 3 C2H2-type zinc fingers span residues 341–363, 369–391, and 397–419; these read LQCPDCDMTFPCFSELISHQNIH, HKCKTCEESFALDSELACHQKSH, and FKCTVCGKTFKSNLHLITHKRTH.

Belongs to the krueppel C2H2-type zinc-finger protein family.

It is found in the nucleus. May be involved in transcriptional regulation. The polypeptide is Zinc finger protein 597 (ZNF597) (Homo sapiens (Human)).